The sequence spans 155 residues: Myosin light chain alkali (155 aa).

EF-hand domains lie at 7 to 41 (REVE…LNLN) and 80 to 115 (GCYE…LGES).

In terms of assembly, myosin is a hexamer of 2 heavy chains and 4 light chains.

The sequence is that of Myosin light chain alkali (Mlc1) from Drosophila virilis (Fruit fly).